The sequence spans 428 residues: Tyrosine--tRNA ligase (428 aa).

Tyr-41 contacts L-tyrosine. The 'HIGH' region signature appears at 46-55 (PTADSLHLGH). The L-tyrosine site is built by Tyr-179 and Gln-183. Residues 239-243 (KFGKT) carry the 'KMSKS' region motif. Lys-242 lines the ATP pocket. In terms of domain architecture, S4 RNA-binding spans 361-418 (TDLMQALVDAELQPSRGQARKTIASNAVTINGEKQSDPEYIFNDEDRLFGRYTLLRRG).

It belongs to the class-I aminoacyl-tRNA synthetase family. TyrS type 1 subfamily. In terms of assembly, homodimer.

The protein resides in the cytoplasm. It carries out the reaction tRNA(Tyr) + L-tyrosine + ATP = L-tyrosyl-tRNA(Tyr) + AMP + diphosphate + H(+). Its function is as follows. Catalyzes the attachment of tyrosine to tRNA(Tyr) in a two-step reaction: tyrosine is first activated by ATP to form Tyr-AMP and then transferred to the acceptor end of tRNA(Tyr). In Salmonella arizonae (strain ATCC BAA-731 / CDC346-86 / RSK2980), this protein is Tyrosine--tRNA ligase.